The following is a 204-amino-acid chain: Large ribosomal subunit protein eL15 (204 aa).

The protein belongs to the eukaryotic ribosomal protein eL15 family.

This chain is Large ribosomal subunit protein eL15 (RpL15), found in Anopheles gambiae (African malaria mosquito).